We begin with the raw amino-acid sequence, 306 residues long: Glutaminase (306 aa).

Substrate-binding residues include S64, N115, E159, N166, Y190, Y242, and V260.

Belongs to the glutaminase family. In terms of assembly, homotetramer.

The enzyme catalyses L-glutamine + H2O = L-glutamate + NH4(+). This chain is Glutaminase, found in Aliivibrio fischeri (strain ATCC 700601 / ES114) (Vibrio fischeri).